A 342-amino-acid polypeptide reads, in one-letter code: UDP-3-O-acylglucosamine N-acyltransferase (342 aa).

His241 serves as the catalytic Proton acceptor.

This sequence belongs to the transferase hexapeptide repeat family. LpxD subfamily. Homotrimer.

The catalysed reaction is a UDP-3-O-[(3R)-3-hydroxyacyl]-alpha-D-glucosamine + a (3R)-hydroxyacyl-[ACP] = a UDP-2-N,3-O-bis[(3R)-3-hydroxyacyl]-alpha-D-glucosamine + holo-[ACP] + H(+). It participates in bacterial outer membrane biogenesis; LPS lipid A biosynthesis. In terms of biological role, catalyzes the N-acylation of UDP-3-O-acylglucosamine using 3-hydroxyacyl-ACP as the acyl donor. Is involved in the biosynthesis of lipid A, a phosphorylated glycolipid that anchors the lipopolysaccharide to the outer membrane of the cell. This is UDP-3-O-acylglucosamine N-acyltransferase from Pasteurella multocida (strain Pm70).